The sequence spans 154 residues: SsrA-binding protein (154 aa).

Residues 131-154 (DKRQDLKQKEAKRDIERAFKERQQ) form a disordered region. The span at 132–154 (KRQDLKQKEAKRDIERAFKERQQ) shows a compositional bias: basic and acidic residues.

It belongs to the SmpB family.

The protein resides in the cytoplasm. Required for rescue of stalled ribosomes mediated by trans-translation. Binds to transfer-messenger RNA (tmRNA), required for stable association of tmRNA with ribosomes. tmRNA and SmpB together mimic tRNA shape, replacing the anticodon stem-loop with SmpB. tmRNA is encoded by the ssrA gene; the 2 termini fold to resemble tRNA(Ala) and it encodes a 'tag peptide', a short internal open reading frame. During trans-translation Ala-aminoacylated tmRNA acts like a tRNA, entering the A-site of stalled ribosomes, displacing the stalled mRNA. The ribosome then switches to translate the ORF on the tmRNA; the nascent peptide is terminated with the 'tag peptide' encoded by the tmRNA and targeted for degradation. The ribosome is freed to recommence translation, which seems to be the essential function of trans-translation. The sequence is that of SsrA-binding protein from Listeria innocua serovar 6a (strain ATCC BAA-680 / CLIP 11262).